Reading from the N-terminus, the 475-residue chain is MVDTEMPFWPTNFGIGSVDLSVMDDHSHSFDIKPFTTVDFSSISAPHYEDLPFARADPMVADYKYDLKLQEYQSAIKVEPASPPYYSEKTQLYNKTHEEPSNSLMAIECRVCSDKASGFHYGVHACEGCKGFFRRTIRLKLIYDRCDLNCRIHKKSRNKCQYCRFQKCLAVGMSHNAIRFGRMPQAEKEKLLAEISSDIDQLNPESADLRALAKHLYDSYIKSFPLTKAKARAILTGKTTDKSPFVIYDMNSLMMGEDKIKFKHITPLQEQSKEVAIRIFQGCQFRSVEAVQEITEYAKNIPGFVSLDLNDQVTLLKYGVHEIIYTMLASLMNKDGVLISEGQGFMTREFLKSLRKPFGDFMEPKFEFAVKFNALELDDSDLAIFIAVIILSGDRPGLLNVKPIEDIQDNLLQALELQLKLNHPEASQLFAKLLQKMTDLRQIVTEHVQLLQVIKKTETDMSLHPLLQEIYKDLY.

Ser-82 carries the post-translational modification Phosphoserine; by MAPK. The segment at residues 106–180 (AIECRVCSDK…VGMSHNAIRF (75 aa)) is a DNA-binding region (nuclear receptor). NR C4-type zinc fingers lie at residues 109–129 (CRVC…CEGC) and 146–168 (CDLN…FQKC). Residues 175-250 (HNAIRFGRMP…DKSPFVIYDM (76 aa)) are interaction with FAM120B. The 266-residue stretch at 208–473 (DLRALAKHLY…HPLLQEIYKD (266 aa)) folds into the NR LBD domain. A Glycyl lysine isopeptide (Lys-Gly) (interchain with G-Cter in ubiquitin) cross-link involves residue Lys-222. The 9aaTAD motif lies at 465 to 473 (PLLQEIYKD).

This sequence belongs to the nuclear hormone receptor family. NR1 subfamily. Interacts with FOXO1 (acetylated form). Heterodimer with other nuclear receptors, such as RXRA. The heterodimer with the retinoic acid receptor RXRA is called adipocyte-specific transcription factor ARF6. Interacts with NCOA6 coactivator, leading to a strong increase in transcription of target genes. Interacts with coactivator PPARBP, leading to a mild increase in transcription of target genes. Interacts with NOCA7 in a ligand-inducible manner. Interacts with NCOA1 and NCOA2 LXXLL motifs. Interacts with ASXL1, ASXL2, DNTTIP2, FAM120B, MAP2K1/MEK1, NR0B2, PDPK1, PRDM16, PRMT2 and TGFB1I1. Interacts (when activated by agonist) with PPP5C. Interacts with HELZ2 and THRAP3; the interaction stimulates the transcriptional activity of PPARG. Interacts with PER2, the interaction is ligand dependent and blocks PPARG recruitment to target promoters. Interacts with NOCT. Interacts with ACTN4. Interacts (when in the liganded conformation) with GPS2. Interacts with CRY1 and CRY2 in a ligand-dependent manner. In the absence of hormonal ligand, interacts with TACC1. In macrophages, interacts with PAQR3 and STUB1; the interactions promote PPARG poylubiquitination and STUB1-mediated degradation. In terms of processing, phosphorylated at basal conditions and dephosphorylated when treated with the ligand. May be dephosphorylated by PPP5C. The phosphorylated form may be inactive and dephosphorylation induces adipogenic activity. Post-translationally, ubiquitinated by E3 ubiquitin-protein ligase complex containing FBXO9; leading to proteasomal degradation. Ubiquitinated at Lys-222 by TRIM55 leading to proteasomal degradation. Ubiquitinated by E3 ubiquitin-protein ligase STUB1/CHIP; leading to proteasomal degradation.

It is found in the nucleus. The protein resides in the cytoplasm. Its activity is regulated as follows. PDPK1 activates its transcriptional activity independently of its kinase activity. Functionally, nuclear receptor that binds peroxisome proliferators such as hypolipidemic drugs and fatty acids. Once activated by a ligand, the nuclear receptor binds to DNA specific PPAR response elements (PPRE) and modulates the transcription of its target genes, such as acyl-CoA oxidase. It therefore controls the peroxisomal beta-oxidation pathway of fatty acids. Key regulator of adipocyte differentiation and glucose homeostasis. ARF6 acts as a key regulator of the tissue-specific adipocyte P2 (aP2) enhancer. Acts as a critical regulator of gut homeostasis by suppressing NF-kappa-B-mediated pro-inflammatory responses. Plays a role in the regulation of cardiovascular circadian rhythms by regulating the transcription of BMAL1 in the blood vessels. The chain is Peroxisome proliferator-activated receptor gamma (PPARG) from Oryctolagus cuniculus (Rabbit).